The sequence spans 202 residues: Superoxide dismutase [Mn] (202 aa).

His27 is a Mn(2+) binding site. 2 positions are modified to phosphothreonine: Thr34 and Thr70. The Mn(2+) site is built by His82, Asp164, and His168.

It belongs to the iron/manganese superoxide dismutase family. As to quaternary structure, homodimer. It depends on Mn(2+) as a cofactor.

It catalyses the reaction 2 superoxide + 2 H(+) = H2O2 + O2. In terms of biological role, destroys superoxide anion radicals which are normally produced within the cells and which are toxic to biological systems. The sequence is that of Superoxide dismutase [Mn] (sodA) from Halalkalibacterium halodurans (strain ATCC BAA-125 / DSM 18197 / FERM 7344 / JCM 9153 / C-125) (Bacillus halodurans).